Here is a 171-residue protein sequence, read N- to C-terminus: Ribosome-binding factor A (171 aa).

The segment covering alanine 120–proline 132 has biased composition (low complexity). The segment at alanine 120 to leucine 171 is disordered. Positions aspartate 133–threonine 142 are enriched in basic and acidic residues. Over residues aspartate 143–aspartate 160 the composition is skewed to acidic residues. Low complexity predominate over residues alanine 161 to leucine 171.

This sequence belongs to the RbfA family. As to quaternary structure, monomer. Binds 30S ribosomal subunits, but not 50S ribosomal subunits or 70S ribosomes.

The protein localises to the cytoplasm. Functionally, one of several proteins that assist in the late maturation steps of the functional core of the 30S ribosomal subunit. Associates with free 30S ribosomal subunits (but not with 30S subunits that are part of 70S ribosomes or polysomes). Required for efficient processing of 16S rRNA. May interact with the 5'-terminal helix region of 16S rRNA. The chain is Ribosome-binding factor A from Kineococcus radiotolerans (strain ATCC BAA-149 / DSM 14245 / SRS30216).